Consider the following 953-residue polypeptide: Protein ENHANCER OF LHP1 1 (953 aa).

WD repeat units lie at residues G15–P55, H60–N99, R102–K143, G144–T183, G192–A232, D236–R275, and K277–S316. Disordered stretches follow at residues S347–L370, E385–K419, and E851–K877. Over residues S349–D359 the composition is skewed to acidic residues. Over residues K853 to K877 the composition is skewed to polar residues. A Nuclear localization signal motif is present at residues T900 to D907. The interval K919–V953 is disordered. Over residues N926–R943 the composition is skewed to basic and acidic residues. Polar residues predominate over residues S944 to V953.

As to quaternary structure, interacts with EZA1/SWN, LHP1, SLD5 and CLF in the nucleus. Expressed in root meristematic zones, initiating lateral roots, young leaves and the shoot apex.

The protein resides in the nucleus. Its function is as follows. Participates in maintaining the H3K27me3 mark at target genes by interacting with LHP1-PRC2 complexes during replication, thus contributing to H3K27me3 inheritance. In Arabidopsis thaliana (Mouse-ear cress), this protein is Protein ENHANCER OF LHP1 1.